Consider the following 374-residue polypeptide: Aclacinomycin 10-hydroxylase RdmB (374 aa).

S-adenosyl-L-methionine contacts are provided by Y171, G190, E213, D240, F241, and S255.

Belongs to the class I-like SAM-binding methyltransferase superfamily. Cation-independent O-methyltransferase family. As to quaternary structure, homodimer. Homotetramer in solution. Tetramers might not be very stable in solution.

The catalysed reaction is 15-demethylaclacinomycin T + AH2 + O2 = 10-decarboxymethylaclacinomycin T + A + CO2 + H2O. The enzyme catalyses 10-carboxy-13-deoxycarminomycin + AH2 + O2 + H(+) = 10-hydroxy-13-deoxycarminomycin + A + CO2 + H2O. It catalyses the reaction 10-hydroxy-13-deoxycarminomycin + S-adenosyl-L-methionine = 10-hydroxy-13-deoxydaunorubicin + S-adenosyl-L-homocysteine + H(+). The protein operates within antibiotic biosynthesis; rhodomycin biosynthesis. Its pathway is antibiotic biosynthesis; aclacinomycin biosynthesis. Its activity is regulated as follows. The hydroxylation reaction requires S-adenosyl-L-methionine (SAM) as a cofactor. S-adenosine-L-homocysteine and sinefungin (a SAM analog) can also support the decarboxylative hydroxylation activity with 10-carboxy-13-deoxycarminomycin as substrate. SAM and its analogs are considered an essential structural ligand to maintain ternary structural integrity and the proper binding mode and orientation of electron-rich substrates during decarboxylative hydroxylation of C-10 by RdmB. Involved in the biosynthesis of anthracyclines, an important group of aromatic polyketide antibiotics used in cancer chemotherapy. Acts as a 10-hydroxylase to catalyze a decarboxylative hydroxylation reaction on anthracyclines. During biosynthesis of rhodomycin, it catalyzes the removal of the carboxylic group at the C-10 position of 15-demethoxy-epsilon-rhodomycin coupled to hydroxylation at the same C-10 position to yield beta-rhodomycin. In vitro, can also catalyze the removal of the carboxylic group at the C-10 position of 15-demethoxyaclacinomycin T coupled to hydroxylation at the same C-10 position to yield 10-decarboxymethylaclacinomycin T. It can also use 10-carboxy-13-deoxycarminomycin, an analog of 15-demethoxy-epsilon-rhodomycin, to yield 10-hydroxy-13-deoxycarminomycin. In terms of biological role, in addition to its hydroxylation activity, it can act in vitro as a S-adenosyl-L-methionine-dependent O-methyltransferase and catalyze the 4-O-methylation of 10-hydroxy-13-deoxycarminomycin to 10-hydroxy-13-deoxydaunorubicin. The triglycosyl group of anthracyclines prevents the methylation reaction. The protein is Aclacinomycin 10-hydroxylase RdmB of Streptomyces purpurascens.